Consider the following 169-residue polypeptide: Transmembrane protein B169L (169 aa).

2 helical membrane passes run 28-48 and 60-80; these read NPFIVALIITAVVLVVFFAIC and TAIYVYICIVALLFLHYYVLN. Asn-88 is a glycosylation site (N-linked (GlcNAc...) asparagine; by host). The interval 107 to 169 is disordered; it reads DEIIPPISPP…EVIMPSQYNN (63 aa). The segment covering 140–154 has biased composition (low complexity); that stretch reads KPADSKPASSADSKP.

Belongs to the asfivirus B169L family.

It localises to the host membrane. The protein localises to the virion. In Ornithodoros (relapsing fever ticks), this protein is Transmembrane protein B169L.